Reading from the N-terminus, the 353-residue chain is Rhodopsin (353 aa).

The Extracellular portion of the chain corresponds to 1–36 (MNGTEGPFFYVPMVNTTGIVRSPYEYPQYYLVNPAA). N-linked (GlcNAc...) asparagine glycans are attached at residues Asn2 and Asn15. The helical transmembrane segment at 37 to 61 (YAALGAYMFLLILVGFPINFLTLYV) threads the bilayer. Residues 62 to 73 (TIEHKKLRTPLN) lie on the Cytoplasmic side of the membrane. Residues 74–96 (YILLNLAVADLFMVLGGFTTTMY) form a helical membrane-spanning segment. Topologically, residues 97-110 (TSMHGYFVLGRLGC) are extracellular. Cys110 and Cys187 are oxidised to a cystine. Residues 111–133 (NIEGFFATLGGEIALWSLVVLAI) form a helical membrane-spanning segment. A 'Ionic lock' involved in activated form stabilization motif is present at residues 134–136 (ERW). The Cytoplasmic segment spans residues 134 to 152 (ERWVVVCKPISNFRFGENH). Residues 153–173 (AIMGLAFTWTMAMACAAPPLV) form a helical membrane-spanning segment. Over 174–202 (GWSRYIPEGMQCSCGIDYYTRAEGFNNES) the chain is Extracellular. A glycan (N-linked (GlcNAc...) asparagine) is linked at Asn200. The chain crosses the membrane as a helical span at residues 203–224 (FVIYMFICHFTIPLTVVFFCYG). Residues 225–252 (RLLCAVKEAAAAQQESETTQRAEKEVTR) are Cytoplasmic-facing. A helical transmembrane segment spans residues 253–274 (MVIMMVIAFLVCWLPYASVAWY). Residues 275-286 (IFTHQGSEFGPV) lie on the Extracellular side of the membrane. The chain crosses the membrane as a helical span at residues 287 to 308 (FMTIPAFFAKSSSIYNPMIYIC). At Lys296 the chain carries N6-(retinylidene)lysine. At 309-353 (LNKQFRHCMITTLCCGKNPFEEEEGASTASKTEASSVSSSSVSPA) the chain is on the cytoplasmic side. 2 S-palmitoyl cysteine lipidation sites follow: Cys322 and Cys323. The segment at 331–353 (EEGASTASKTEASSVSSSSVSPA) is disordered. Residues 334–353 (ASTASKTEASSVSSSSVSPA) are compositionally biased toward low complexity.

This sequence belongs to the G-protein coupled receptor 1 family. Opsin subfamily. Phosphorylated on some or all of the serine and threonine residues present in the C-terminal region. Post-translationally, contains one covalently linked retinal chromophore.

The protein localises to the membrane. It localises to the cell projection. The protein resides in the cilium. It is found in the photoreceptor outer segment. Its function is as follows. Photoreceptor required for image-forming vision at low light intensity. While most salt water fish species use retinal as chromophore, most freshwater fish use 3-dehydroretinal, or a mixture of retinal and 3-dehydroretinal. Light-induced isomerization of 11-cis to all-trans retinal triggers a conformational change that activates signaling via G-proteins. Subsequent receptor phosphorylation mediates displacement of the bound G-protein alpha subunit by arrestin and terminates signaling. The chain is Rhodopsin (rho) from Diplodus annularis (Annular seabream).